We begin with the raw amino-acid sequence, 248 residues long: MGDDDTPVCLSVASCKGVSCWLDKLLLWALTLSITLRNTAVDCRRVDRNGLLSPNLNSSMSVVRMGQNVSLSCSSKNTSIDITYSLFLGKRYLESKRRRGGAVDFHLRISNANESGPYKCKVNDSNSSKYSQNFNFTIIQDESCSSCLLSLLLPGVLLGLILPGLAFLIYLKYKKGCTGKTLKENESKGSGDAPTQGELYANICETQKGSEQLQEIHYTTPVFKEVAPTEQEGLEDRKDDYIYSELTY.

Residues 1 to 33 (MGDDDTPVCLSVASCKGVSCWLDKLLLWALTLS) form the signal peptide. At 34–150 (ITLRNTAVDC…DESCSSCLLS (117 aa)) the chain is on the extracellular side. Residues 54–137 (PNLNSSMSVV…SKYSQNFNFT (84 aa)) form the Ig-like C2-type domain. An N-linked (GlcNAc...) asparagine glycan is attached at Asn68. An intrachain disulfide couples Cys73 to Cys120. Residue Asn135 is glycosylated (N-linked (GlcNAc...) asparagine). Residues 151–171 (LLLPGVLLGLILPGLAFLIYL) traverse the membrane as a helical segment. Topologically, residues 172–248 (KYKKGCTGKT…DDYIYSELTY (77 aa)) are cytoplasmic. 2 short sequence motifs (ITIM motif) span residues 216-221 (IHYTTP) and 241-246 (YIYSEL). Tyr218 and Tyr243 each carry phosphotyrosine.

As to quaternary structure, monomer. Interacts (tyrosine-phosphorylated) with PTPN6, PTPN11 and INPP5D. In terms of processing, N-glycosylated. As to expression, mast cell-specific. Expressed in primary and transformed mast cells.

The protein localises to the cell membrane. Functionally, immunoglobulin-like receptor which plays an inhibitory role in degranulation of mast cells. Negatively regulates IgE-mediated mast cell activation and suppresses the type I immediate hypersensitivity reaction. This chain is Allergin-1 (Milr1), found in Rattus norvegicus (Rat).